The primary structure comprises 931 residues: Valine--tRNA ligase (931 aa).

The 'HIGH' region motif lies at 43-53 (PNVTGALHIGH). Positions 351–370 (IPHTDKDGNAHDAEPRTIQT) are disordered. The segment covering 353 to 365 (HTDKDGNAHDAEP) has biased composition (basic and acidic residues). Positions 552–556 (KMSKS) match the 'KMSKS' region motif. Residue Lys-555 coordinates ATP. The segment at 691 to 717 (LQGRGLGEGDEAVPAPADGPLSPALSP) is disordered. Positions 864–930 (VIDIAAERER…DRLSAALARL (67 aa)) form a coiled coil.

Belongs to the class-I aminoacyl-tRNA synthetase family. ValS type 1 subfamily. In terms of assembly, monomer.

It is found in the cytoplasm. The enzyme catalyses tRNA(Val) + L-valine + ATP = L-valyl-tRNA(Val) + AMP + diphosphate. Catalyzes the attachment of valine to tRNA(Val). As ValRS can inadvertently accommodate and process structurally similar amino acids such as threonine, to avoid such errors, it has a 'posttransfer' editing activity that hydrolyzes mischarged Thr-tRNA(Val) in a tRNA-dependent manner. The polypeptide is Valine--tRNA ligase (Sphingopyxis alaskensis (strain DSM 13593 / LMG 18877 / RB2256) (Sphingomonas alaskensis)).